The primary structure comprises 100 residues: uncharacterized protein (100 aa).

This is an uncharacterized protein from Caulobacter vibrioides (strain ATCC 19089 / CIP 103742 / CB 15) (Caulobacter crescentus).